The following is a 246-amino-acid chain: Large ribosomal subunit protein uL4 (246 aa).

Residues 37–103 (AAQANRKQDY…TEKDRSLDLN (67 aa)) form a disordered region. A compositionally biased stretch (basic and acidic residues) spans 92 to 103 (PKTEKDRSLDLN).

It belongs to the universal ribosomal protein uL4 family. In terms of assembly, part of the 50S ribosomal subunit. Interacts weakly with proteins L18e, L24 and L37e. Has been cross-linked to L18e.

One of the primary rRNA binding proteins, this protein initially binds near the 5'-end of the 23S rRNA. It is important during the early stages of 50S assembly. Functionally, makes multiple contacts with different domains of the 23S rRNA in the assembled 50S subunit. In terms of biological role, forms part of the polypeptide exit tunnel, in which it helps forms a bend with protein L22. Contacts the macrolide antibiotic spiramycin in the polypeptide exit tunnel. This chain is Large ribosomal subunit protein uL4 (rpl4), found in Haloarcula marismortui (strain ATCC 43049 / DSM 3752 / JCM 8966 / VKM B-1809) (Halobacterium marismortui).